A 96-amino-acid polypeptide reads, in one-letter code: Protein RnfH (96 aa).

Belongs to the UPF0125 (RnfH) family.

The sequence is that of Protein RnfH from Hahella chejuensis (strain KCTC 2396).